The primary structure comprises 283 residues: Coiled-coil domain-containing protein 42 homolog (283 aa).

2 coiled-coil regions span residues 31–139 and 174–204; these read ATQL…LQRY and QDLR…HRVS.

It belongs to the CFAP73 family.

The protein is Coiled-coil domain-containing protein 42 homolog of Monosiga brevicollis (Choanoflagellate).